Reading from the N-terminus, the 89-residue chain is Small ribosomal subunit protein uS15 (89 aa).

The protein belongs to the universal ribosomal protein uS15 family. Part of the 30S ribosomal subunit. Forms a bridge to the 50S subunit in the 70S ribosome, contacting the 23S rRNA.

Functionally, one of the primary rRNA binding proteins, it binds directly to 16S rRNA where it helps nucleate assembly of the platform of the 30S subunit by binding and bridging several RNA helices of the 16S rRNA. Forms an intersubunit bridge (bridge B4) with the 23S rRNA of the 50S subunit in the ribosome. The polypeptide is Small ribosomal subunit protein uS15 (Escherichia coli O157:H7).